We begin with the raw amino-acid sequence, 580 residues long: Laccase-6 (580 aa).

The N-terminal stretch at 1–22 (MSCSWMIPVFAILAFVASAAQA) is a signal peptide. Plastocyanin-like domains follow at residues 30–148 (NVAT…PRRA) and 158–317 (EEKT…YVDA). Residues N44 and N78 are each glycosylated (N-linked (GlcNAc...) asparagine). 4 residues coordinate Cu cation: H82, H84, H127, and H129. Residues N306, N335, N385, N397, and N462 are each glycosylated (N-linked (GlcNAc...) asparagine). Residues 424-564 (DFPDQPPVAF…AMVFEVESGP (141 aa)) form the Plastocyanin-like 3 domain. Positions 480, 483, 485, 543, 544, 545, and 549 each coordinate Cu cation.

Belongs to the multicopper oxidase family. Cu cation is required as a cofactor.

It localises to the secreted. The protein resides in the extracellular space. It is found in the apoplast. The catalysed reaction is 4 hydroquinone + O2 = 4 benzosemiquinone + 2 H2O. In terms of biological role, lignin degradation and detoxification of lignin-derived products. In Oryza sativa subsp. japonica (Rice), this protein is Laccase-6 (LAC6).